Reading from the N-terminus, the 323-residue chain is uncharacterized protein (323 aa).

2 helical membrane-spanning segments follow: residues 232–252 and 267–287; these read LASYAGILMSGTGFLYMFIVL and SLIVIQLLFSGIVLLILGVIG.

This sequence belongs to the glycosyltransferase 2 family. GtrB subfamily.

It localises to the cell membrane. This is an uncharacterized protein from Bacillus subtilis (strain 168).